The following is a 67-amino-acid chain: Small ribosomal subunit protein eS31 (67 aa).

Zn(2+) contacts are provided by Cys31, Cys34, Cys49, and Cys52. The segment at 31 to 52 (CPKCGAGVFMAEHLNRFACGKC) adopts a C4-type zinc-finger fold.

Belongs to the eukaryotic ribosomal protein eS31 family. As to quaternary structure, part of the 30S ribosomal subunit. Zn(2+) serves as cofactor.

The protein is Small ribosomal subunit protein eS31 of Methanococcus maripaludis (strain C6 / ATCC BAA-1332).